The primary structure comprises 709 residues: MASWLKVAEDLLEVVDRRAKIVATELSDEQSSPQPSGSSSQEGQAKKGKLREKGPLKLATGDAGSRTAAQKERKSRQPPRERIKIEKIRPSPPVDSSSVDASASKPDVSSSDVKGLDDDGGAEKEEKVVVDRKNDIGAEVVDTEVEVQSTERSAEDAAIVVDGAADSGNSEGAAESSAPSVPDERCEPSISNQDAEIVSAVNLEEKDSAMEVIHEKNIKEVPDTQVSGKSQDSKREGLSDSPESTENQQEHKLDSGSVKDQDQLEEARGLLKNVVKTGQSKEARLARVCAGLSSRLQEYKSENAQLEELLVQEREKCSSYEAHMKQLQQELSMSRVEGSRAESNMVDALTAKNAEIESLVKSLDSWKKKAAASEEKLAALQEDMDGLKRNRELTETRVIQALREELATVERRAEEERIAHNATKMAAVEREVELEHRAVEASNALARIQRAADQSSSRAMELEHKVAVLEVECASLQQELQEMEARNRRAQKKPSEEANQVIQMQAWQEEVERARQSQREAETKISSLEAELQKMRVEMAGMKRDAEHYSRQEHVELEKRYRELTDLLYHKQTQLESMASEKAALEFQLEKSIKQFHEVQMEAERSRVARRSASAWEEDADIKALEPLPLHHRHMATANQQLQKAAKLLDSGAVRATRFLWRHPVARVSLLFYLVFVHLFLMYLMHRLQDFASREGPTAMGGLANSDLP.

At 1–664 (MASWLKVAED…RATRFLWRHP (664 aa)) the chain is on the cytoplasmic side. 3 disordered regions span residues 24–132 (TELS…VVDR), 144–195 (EVEV…NQDA), and 211–265 (EVIH…DQLE). The segment covering 29-43 (EQSSPQPSGSSSQEG) has biased composition (low complexity). Over residues 78–89 (PPRERIKIEKIR) the composition is skewed to basic and acidic residues. The span at 94 to 113 (VDSSSVDASASKPDVSSSDV) shows a compositional bias: low complexity. Residues 114–132 (KGLDDDGGAEKEEKVVVDR) are compositionally biased toward basic and acidic residues. Residues 162 to 180 (DGAADSGNSEGAAESSAPS) are compositionally biased toward low complexity. Basic and acidic residues-rich tracts occupy residues 211-222 (EVIHEKNIKEVP) and 248-265 (QQEHKLDSGSVKDQDQLE). Positions 287–592 (RVCAGLSSRL…AALEFQLEKS (306 aa)) form a coiled coil. The helical; Signal-anchor for type II membrane protein transmembrane segment at 665–684 (VARVSLLFYLVFVHLFLMYL) threads the bilayer. The Lumenal portion of the chain corresponds to 685–707 (MHRLQDFASREGPTAMGGLANSD).

It localises to the golgi apparatus membrane. In terms of biological role, may be involved in maintaining Golgi structure and in intra-Golgi transport. The protein is Golgin-84 of Oryza sativa subsp. japonica (Rice).